A 107-amino-acid polypeptide reads, in one-letter code: Protein TAP1 (107 aa).

Positions 1 to 23 (MESKRVDVLVGLMLIMAIFGVHS) are cleaved as a signal peptide.

As to expression, stamen.

The protein is Protein TAP1 (TAP1) of Antirrhinum majus (Garden snapdragon).